Here is a 670-residue protein sequence, read N- to C-terminus: Extracellular matrix protein 2 (670 aa).

An N-terminal signal peptide occupies residues 1–19; sequence MKLAVLFCFILLIVLQTDC. The region spanning 96-153 is the VWFC domain; the sequence is GYCFVKGMIMYNKAVWSPEPCTTCLCSNGRVLCDETECHPKACPYTIKPEGECCPICS. Positions 185–270 are disordered; sequence SEEDEEIAEG…EEDAIRGDVF (86 aa). The segment covering 192-227 has biased composition (basic and acidic residues); the sequence is AEGHKEHKKETSVPTKIHGDGERTERKLRPEKEGRS. The segment covering 241–263 has biased composition (acidic residues); the sequence is ESKEETEREGEEEEEEEEEEEED. Residues 266 to 268 carry the Cell attachment site motif; sequence RGD. Residues 278–315 enclose the LRRNT domain; the sequence is PGTPRGRPRLPRSCSLSYRTISCVHADFTEIPPITAPE. 13 LRR repeats span residues 339–359, 365–386, 387–407, 410–430, 436–456, 457–478, 481–501, 507–528, 529–549, 553–573, 580–601, 603–624, and 632–655; these read NLER…GPKA, KLMR…LPST, LEEL…SLSD, QLVT…DPLA, SLSY…GLPA, STEE…CFNH, KITM…APLA, NLES…LPKS, LLHL…VFGH, GLEY…DLVS, SLRE…IQDM, ALHF…QICN, and ALEH…AFSC. Asparagine 349 carries N-linked (GlcNAc...) asparagine glycosylation. A glycan (N-linked (GlcNAc...) asparagine) is linked at asparagine 420. A glycan (N-linked (GlcNAc...) asparagine) is linked at asparagine 477.

It belongs to the small leucine-rich proteoglycan (SLRP) family. SLRP class I subfamily. As to quaternary structure, interacts with numerous extracellular matrix proteins. Interacts with isoform 1 of MSL1. Interacts with isoform 3 of RASSF1.

The protein resides in the secreted. It is found in the extracellular space. The protein localises to the extracellular matrix. Its function is as follows. Promotes matrix assembly and cell adhesiveness. This Mus musculus (Mouse) protein is Extracellular matrix protein 2 (Ecm2).